The primary structure comprises 1143 residues: Serine/threonine-protein kinase BRI1-like 2 (1143 aa).

The signal sequence occupies residues 1–31 (MTTSPIRVRIRTRIQISFIFLLTHLSQSSSS). The Extracellular portion of the chain corresponds to 32–756 (DQSSLKTDSL…GTRAASWANS (725 aa)). A Cys pair 1 motif is present at residues 68–75 (CQFSGVTC). 24 LRR repeats span residues 77 to 101 (GGRV…AFTS), 102 to 125 (LDSL…LLLL), 126 to 150 (PLTL…FFSK), 151 to 175 (YSNL…LFLS), 177 to 200 (KKLQ…TIPL), 203 to 227 (CVSM…LINC), 228 to 250 (TNLK…SFGE), 251 to 275 (LKLL…IGDT), 277 to 299 (RSLQ…SLSS), 300 to 324 (CSWL…ILRS), 326 to 349 (GSLQ…ISAC), 351 to 373 (SLRI…LCPG), 374 to 398 (AASL…ISQC), 399 to 422 (SELR…IGNL), 424 to 446 (KLEQ…IGKL), 447 to 470 (QNLK…FFNC), 472 to 493 (NIEW…DFGI), 494 to 518 (LSRL…LGKC), 520 to 542 (TLVW…LGRQ), 570 to 594 (VGGL…KSCD), 610 to 634 (YQTI…IGEM), 635 to 660 (IALQ…QLKN), 662 to 681 (GVFD…SFSN), and 682 to 707 (LSFL…QLST). Asn-84 and Asn-118 each carry an N-linked (GlcNAc...) asparagine glycan. N-linked (GlcNAc...) asparagine glycosylation is found at Asn-163, Asn-188, Asn-226, and Asn-234. Asn-288 and Asn-312 each carry an N-linked (GlcNAc...) asparagine glycan. An N-linked (GlcNAc...) asparagine glycan is attached at Asn-412. Asn-469 carries an N-linked (GlcNAc...) asparagine glycan. The N-linked (GlcNAc...) asparagine glycan is linked to Asn-506. N-linked (GlcNAc...) asparagine glycosylation occurs at Asn-681. A Cys pair 2 motif is present at residues 720-727 (CGVPLPEC). A helical transmembrane segment spans residues 757–777 (IVLGVLISAASVCILIVWAIA). The Cytoplasmic segment spans residues 778–1143 (VRARRRDADD…NNSHSHSNSL (366 aa)). Thr-835 carries the post-translational modification Phosphothreonine. The Protein kinase domain maps to 838 to 1129 (FSAASMIGHG…LQVVASLREL (292 aa)). ATP is bound by residues 844–852 (IGHGGFGEV) and Lys-866. Residue Tyr-911 is modified to Phosphotyrosine. Asp-966 functions as the Proton acceptor in the catalytic mechanism. Residue Ser-1001 is modified to Phosphoserine. A Phosphotyrosine modification is found at Tyr-1009.

The protein belongs to the protein kinase superfamily. Ser/Thr protein kinase family. In terms of assembly, interacts with TTL3. In terms of tissue distribution, expressed in provascular and procambial sites throughout plant development. Expressed throughout globe- to heart-staged embryos. Then, it is restricted to procambial cells by the late torpedo stage, and this pattern persists throughout the duration of embryo development. After germination, it is expressed not only in procambial cells throughout the plant but also in all lateral organ primordia before the onset of vascularization.

It is found in the cell membrane. It catalyses the reaction L-seryl-[protein] + ATP = O-phospho-L-seryl-[protein] + ADP + H(+). It carries out the reaction L-threonyl-[protein] + ATP = O-phospho-L-threonyl-[protein] + ADP + H(+). In terms of biological role, receptor with a serine/threonine-protein kinase activity, which may transduce extracellular spatial and temporal signals into downstream cell differentiation responses in provascular and procambial cells. In contrast to BRI1, BRL1 and BRL3, it does not bind brassinolide. The chain is Serine/threonine-protein kinase BRI1-like 2 from Arabidopsis thaliana (Mouse-ear cress).